Consider the following 1199-residue polypeptide: MSPAAAAADGGERRRPPLGVREGRGRTRGCGGPAGAAALGLALLGLALYLVPAAAALAWLAVGASAAWWGLSREPRGPRGLSSFVRESRRHPRPALTASPLPAKSPVNGSLCEPRSPLGGPDPAELLLMGSYLGKPGPPEPALPQDPRDRPGRRPPSRSPPSSSTAQRVHHVYPALPTPLLRPSRRPPHRDCGPLSSRFVITPRRRYPIQQAQYSLLGALPTVCWNGGHKKAVLSARNSRMVCSPVTVRIAPPDSKLFRSPMPEQILSTTLSSPSSNAPDPCAKETVLNALKEKKKRTVAEEDQLHLDGQENKRRRHDSSGSGHSAFEPLVANGVPAAFVPKPGSLKRSLASQSSDDHLNKRSRTSSVSSLTSTCTGGIPSSSRNAITSSYSSTRGVSQLWKRSGPTSSPFSSPASSRSQTPERPAKKTREEEPCHQSSSSAPLVTDKESPGEKVTDPATGKQQSLWTSPPTPGSSGQRKRKIQLLPSRRGDQLTLPPPPELGYSITAEDLDMERRASLQWFNKVLEDKTDDASTPATDTSPATSPPFTLTLPTVGPAASPASLPAPSSNPLLESLKKMQESPAPSSSEPPEAATVAAPSPPKTPSLLAPLVSPLTGPLASTSSDSKPTTTFLGLASASSATPLTDTKAPGVSQAQLCVSTPAATAPSPTPASTLFGMLSPPASSSSLATPGPACASPMFKPIFPATPKSESDNPLPTSSSAATTTPASTALPTTATATAHTFKPIFESVEPFAAMPLSPPFSLKQTTAPATTAATSAPLLTGLGTATSTVATGTTASASKPVFGFGVTTAASTASTIASTSQSILFGGAPPVTASSSAPALASIFQFGKPLAPAASVAGTSFSQSLASSAQTAASNSSGGFSGFGGTLTTSTSAPATTSQPTLTFSNTVTPTFNIPFSASAKPALPTYPGANSQPTFGATDGATKPALAPSFGSSFTFGNSVASAPSAAPAPAAFGGAAQPAFGGLKASASTFGTPASTQPAFGSTTSVFSFGSATTSGFGAAAATTQTTHSGSSSSLFGSSTPSPFTFGGSAAPAGGGGFGLSATPGTGSTSGTFSFGSGQSGTTGTTTSFGGSLSQNTLGAPSQSSPFAFSVGSTPESKPVFGGTSTPTFGQSAPAPGVGTTGSSLSFGAPSTPAQGFVGVGPFGSGAPSFSIGAGSKTPGARQRLQARRQHTRKK.

Positions 1–29 (MSPAAAAADGGERRRPPLGVREGRGRTRG) are disordered. The segment at 1 to 56 (MSPAAAAADGGERRRPPLGVREGRGRTRGCGGPAGAAALGLALLGLALYLVPAAAA) is cisternal side. Over residues 10-25 (GGERRRPPLGVREGRG) the composition is skewed to basic and acidic residues. Residues 57 to 77 (LAWLAVGASAAWWGLSREPRG) form a helical membrane-spanning segment. Positions 76–1199 (RGPRGLSSFV…QARRQHTRKK (1124 aa)) are pore side. A disordered region spans residues 82–197 (SSFVRESRRH…PHRDCGPLSS (116 aa)). Phosphoserine is present on residues Ser83 and Ser244. Disordered regions lie at residues 294 to 328 (KKKR…SAFE), 344 to 509 (GSLK…ITAE), 528 to 631 (DKTD…PTTT), 701 to 734 (KPIF…ALPT), 1061 to 1151 (GFGL…SLSF), and 1163 to 1199 (GVGP…TRKK). A compositionally biased stretch (basic and acidic residues) spans 298–312 (TVAEEDQLHLDGQEN). Ser319, Ser322, Ser325, Ser345, Ser355, Ser367, and Ser370 each carry phosphoserine. A compositionally biased stretch (low complexity) spans 365–376 (TSSVSSLTSTCT). Positions 379–397 (IPSSSRNAITSSYSSTRGV) are enriched in polar residues. Over residues 404–419 (SGPTSSPFSSPASSRS) the composition is skewed to low complexity. Phosphoserine occurs at positions 408, 409, 412, 413, 416, and 417. Basic and acidic residues-rich tracts occupy residues 424–435 (RPAKKTREEEPC) and 446–456 (TDKESPGEKVT). Positions 461-477 (GKQQSLWTSPPTPGSSG) are enriched in polar residues. Composition is skewed to low complexity over residues 533–547 (ASTP…TSPP), 557–574 (PAAS…PLLE), and 581–598 (ESPA…TVAA). Positions 619-631 (LASTSSDSKPTTT) are enriched in polar residues. Composition is skewed to low complexity over residues 715–734 (PLPT…ALPT) and 1064–1098 (LSAT…GSLS). Residues 1099–1120 (QNTLGAPSQSSPFAFSVGSTPE) are compositionally biased toward polar residues. The span at 1189-1199 (LQARRQHTRKK) shows a compositional bias: basic residues.

This sequence belongs to the POM121 family. Post-translationally, proteolytically cleaved by caspase-3 during apoptosis.

Its subcellular location is the nucleus. The protein resides in the nuclear pore complex. It localises to the nucleus membrane. The protein localises to the endoplasmic reticulum membrane. Functionally, essential component of the nuclear pore complex (NPC). The repeat-containing domain may be involved in anchoring components of the pore complex to the pore membrane. When overexpressed in cells induces the formation of cytoplasmic annulate lamellae (AL). In Rattus norvegicus (Rat), this protein is Nuclear envelope pore membrane protein POM 121 (Pom121).